The chain runs to 654 residues: Coiled-coil domain-containing protein 81 (654 aa).

The interval Ser196–Lys270 is disordered. Residue Ser206 is modified to Phosphoserine. Composition is skewed to basic and acidic residues over residues Arg212 to Thr222 and Gly232 to Ala251. Ser273, Ser275, Ser296, and Ser419 each carry phosphoserine. A compositionally biased stretch (polar residues) spans Glu293–Arg302. The segment at Glu293 to Asp318 is disordered. The stretch at Ser431–Arg562 forms a coiled coil.

It is found in the cytoplasm. It localises to the cytoskeleton. The protein localises to the microtubule organizing center. The protein resides in the centrosome. This is Coiled-coil domain-containing protein 81 (Ccdc81) from Mus musculus (Mouse).